Consider the following 149-residue polypeptide: 3-dehydroquinate dehydratase (149 aa).

Tyrosine 23 serves as the catalytic Proton acceptor. Substrate contacts are provided by asparagine 74, histidine 80, and aspartate 87. The Proton donor role is filled by histidine 100. Residues 101 to 102 and arginine 111 each bind substrate; that span reads LS.

The protein belongs to the type-II 3-dehydroquinase family. In terms of assembly, homododecamer.

The enzyme catalyses 3-dehydroquinate = 3-dehydroshikimate + H2O. Its pathway is metabolic intermediate biosynthesis; chorismate biosynthesis; chorismate from D-erythrose 4-phosphate and phosphoenolpyruvate: step 3/7. Functionally, catalyzes a trans-dehydration via an enolate intermediate. This Ruegeria pomeroyi (strain ATCC 700808 / DSM 15171 / DSS-3) (Silicibacter pomeroyi) protein is 3-dehydroquinate dehydratase.